The sequence spans 305 residues: UDP-3-O-acyl-N-acetylglucosamine deacetylase (305 aa).

Zn(2+)-binding residues include His-79, His-238, and Asp-242. The active-site Proton donor is the His-265.

This sequence belongs to the LpxC family. Zn(2+) serves as cofactor.

The enzyme catalyses a UDP-3-O-[(3R)-3-hydroxyacyl]-N-acetyl-alpha-D-glucosamine + H2O = a UDP-3-O-[(3R)-3-hydroxyacyl]-alpha-D-glucosamine + acetate. Its pathway is glycolipid biosynthesis; lipid IV(A) biosynthesis; lipid IV(A) from (3R)-3-hydroxytetradecanoyl-[acyl-carrier-protein] and UDP-N-acetyl-alpha-D-glucosamine: step 2/6. Functionally, catalyzes the hydrolysis of UDP-3-O-myristoyl-N-acetylglucosamine to form UDP-3-O-myristoylglucosamine and acetate, the committed step in lipid A biosynthesis. In Vibrio parahaemolyticus serotype O3:K6 (strain RIMD 2210633), this protein is UDP-3-O-acyl-N-acetylglucosamine deacetylase.